Reading from the N-terminus, the 100-residue chain is MYLSPQEKDKLLVVTAALLAERRLNRGLKLNHPEAVAWLSFQVLEGARDGKSVSTLMNEGTTWLTKEQVMEGVPELIHEVQIEAVFPDGTKLVTLHNPIS.

Belongs to the urease gamma subunit family. As to quaternary structure, heterotrimer of UreA (gamma), UreB (beta) and UreC (alpha) subunits. Three heterotrimers associate to form the active enzyme.

The protein localises to the cytoplasm. The enzyme catalyses urea + 2 H2O + H(+) = hydrogencarbonate + 2 NH4(+). It participates in nitrogen metabolism; urea degradation; CO(2) and NH(3) from urea (urease route): step 1/1. In Prochlorococcus marinus (strain NATL2A), this protein is Urease subunit gamma.